The chain runs to 75 residues: Small ribosomal subunit protein bS18 (75 aa).

The protein belongs to the bacterial ribosomal protein bS18 family. As to quaternary structure, part of the 30S ribosomal subunit. Forms a tight heterodimer with protein bS6.

Binds as a heterodimer with protein bS6 to the central domain of the 16S rRNA, where it helps stabilize the platform of the 30S subunit. The polypeptide is Small ribosomal subunit protein bS18 (Klebsiella pneumoniae (strain 342)).